The chain runs to 64 residues: Large ribosomal subunit protein uL29 (64 aa).

It belongs to the universal ribosomal protein uL29 family.

This chain is Large ribosomal subunit protein uL29, found in Paraburkholderia phytofirmans (strain DSM 17436 / LMG 22146 / PsJN) (Burkholderia phytofirmans).